Consider the following 382-residue polypeptide: UDP-4-amino-4-deoxy-L-arabinose--oxoglutarate aminotransferase (382 aa).

At Lys182 the chain carries N6-(pyridoxal phosphate)lysine.

Belongs to the DegT/DnrJ/EryC1 family. ArnB subfamily. In terms of assembly, homodimer. The cofactor is pyridoxal 5'-phosphate.

It catalyses the reaction UDP-4-amino-4-deoxy-beta-L-arabinose + 2-oxoglutarate = UDP-beta-L-threo-pentopyranos-4-ulose + L-glutamate. Its pathway is nucleotide-sugar biosynthesis; UDP-4-deoxy-4-formamido-beta-L-arabinose biosynthesis; UDP-4-deoxy-4-formamido-beta-L-arabinose from UDP-alpha-D-glucuronate: step 2/3. It participates in bacterial outer membrane biogenesis; lipopolysaccharide biosynthesis. In terms of biological role, catalyzes the conversion of UDP-4-keto-arabinose (UDP-Ara4O) to UDP-4-amino-4-deoxy-L-arabinose (UDP-L-Ara4N). The modified arabinose is attached to lipid A and is required for resistance to polymyxin and cationic antimicrobial peptides. The chain is UDP-4-amino-4-deoxy-L-arabinose--oxoglutarate aminotransferase from Yersinia enterocolitica serotype O:8 / biotype 1B (strain NCTC 13174 / 8081).